The chain runs to 247 residues: Uridylate kinase (247 aa).

17-20 contacts ATP; it reads KFSG. Gly59 is a binding site for UMP. Residues Gly60 and Arg64 each coordinate ATP. UMP contacts are provided by residues Asp79 and 140-147; that span reads TGNPFFTT. Thr167, Tyr173, and Asp176 together coordinate ATP.

Belongs to the UMP kinase family. In terms of assembly, homohexamer.

It localises to the cytoplasm. It carries out the reaction UMP + ATP = UDP + ADP. The protein operates within pyrimidine metabolism; CTP biosynthesis via de novo pathway; UDP from UMP (UMPK route): step 1/1. With respect to regulation, inhibited by UTP. Functionally, catalyzes the reversible phosphorylation of UMP to UDP. This chain is Uridylate kinase, found in Legionella pneumophila (strain Paris).